The following is a 128-amino-acid chain: Methylglyoxal synthase (128 aa).

The region spanning 1 to 128 (MRIALIAHDR…MQDHPGNRQA (128 aa)) is the MGS-like domain. Residues His8, Lys12, 34 to 37 (TGTT), and 54 to 55 (SG) contribute to the substrate site. Asp60 (proton donor/acceptor) is an active-site residue. A substrate-binding site is contributed by His87.

The protein belongs to the methylglyoxal synthase family.

It carries out the reaction dihydroxyacetone phosphate = methylglyoxal + phosphate. Its function is as follows. Catalyzes the formation of methylglyoxal from dihydroxyacetone phosphate. This is Methylglyoxal synthase from Moorella thermoacetica (strain ATCC 39073 / JCM 9320).